The chain runs to 198 residues: ATP synthase subunit delta (198 aa).

This sequence belongs to the ATPase delta chain family. In terms of assembly, F-type ATPases have 2 components, F(1) - the catalytic core - and F(0) - the membrane proton channel. F(1) has five subunits: alpha(3), beta(3), gamma(1), delta(1), epsilon(1). F(0) has three main subunits: a(1), b(2) and c(10-14). The alpha and beta chains form an alternating ring which encloses part of the gamma chain. F(1) is attached to F(0) by a central stalk formed by the gamma and epsilon chains, while a peripheral stalk is formed by the delta and b chains.

The protein localises to the cell inner membrane. F(1)F(0) ATP synthase produces ATP from ADP in the presence of a proton or sodium gradient. F-type ATPases consist of two structural domains, F(1) containing the extramembraneous catalytic core and F(0) containing the membrane proton channel, linked together by a central stalk and a peripheral stalk. During catalysis, ATP synthesis in the catalytic domain of F(1) is coupled via a rotary mechanism of the central stalk subunits to proton translocation. In terms of biological role, this protein is part of the stalk that links CF(0) to CF(1). It either transmits conformational changes from CF(0) to CF(1) or is implicated in proton conduction. This Gluconacetobacter diazotrophicus (strain ATCC 49037 / DSM 5601 / CCUG 37298 / CIP 103539 / LMG 7603 / PAl5) protein is ATP synthase subunit delta.